Reading from the N-terminus, the 327-residue chain is Zinc transport protein ZntB (327 aa).

The Cytoplasmic portion of the chain corresponds to 1–273 (MEAIKGSDVN…ARRTYTMSLM (273 aa)). Residues 274-294 (AMVFLPSTFLTGLFGVNLGGI) traverse the membrane as a helical segment. Topologically, residues 295–300 (PGGGWR) are periplasmic. Residues 301–321 (FGFSLFCILLVVLIGGVTLWL) form a helical membrane-spanning segment. Residues 322–327 (HRSKWL) are Cytoplasmic-facing.

Belongs to the CorA metal ion transporter (MIT) (TC 1.A.35) family.

The protein localises to the cell inner membrane. It carries out the reaction Zn(2+)(out) + H(+)(out) = Zn(2+)(in) + H(+)(in). Functionally, zinc transporter. Acts as a Zn(2+):proton symporter, which likely mediates zinc ion uptake. In Salmonella enteritidis PT4 (strain P125109), this protein is Zinc transport protein ZntB.